A 398-amino-acid chain; its full sequence is Acetyl-CoA acetyltransferase (398 aa).

Residue S2 is modified to N-acetylserine. C91 functions as the Acyl-thioester intermediate in the catalytic mechanism. 2 residues coordinate CoA: Y186 and K231. Y186 contributes to the K(+) binding site. K(+) is bound by residues A248, A249, and A251. S252 is a CoA binding site. V350 contacts K(+). Active-site proton acceptor residues include H354 and C384.

The protein belongs to the thiolase-like superfamily. Thiolase family. As to quaternary structure, homotetramer.

It localises to the cytoplasm. It carries out the reaction 2 acetyl-CoA = acetoacetyl-CoA + CoA. It functions in the pathway metabolic intermediate biosynthesis; (R)-mevalonate biosynthesis; (R)-mevalonate from acetyl-CoA: step 1/3. In terms of biological role, acetyl-CoA acetyltransferase; part of the first module of ergosterol biosynthesis pathway that includes the early steps of the pathway, conserved across all eukaryotes, and which results in the formation of mevalonate from acetyl-coenzyme A (acetyl-CoA). In this module, the acetyl-CoA acetyltransferase ERG10 catalyzes the formation of acetoacetyl-CoA. The hydroxymethylglutaryl-CoA synthase ERG13 then condenses acetyl-CoA with acetoacetyl-CoA to form HMG-CoA. The rate-limiting step of the early module is the reduction to mevalonate by the 3-hydroxy-3-methylglutaryl-coenzyme A (HMG-CoA) reductases HMG1 and HMG2 which are derived from a single ancestral HMGR gene by gene duplication. This Saccharomyces pastorianus (strain ATCC 76670 / Carlsberg bottom yeast no.2 / CBS 1503 / CLIB 180 / NBRC 10610 / NRRL Y-1525) (Saaz-type lager yeast) protein is Acetyl-CoA acetyltransferase.